Here is a 272-residue protein sequence, read N- to C-terminus: Isoprenyl transferase (272 aa).

Asp32 is an active-site residue. Residue Asp32 coordinates Mg(2+). Substrate contacts are provided by residues 33–36, Trp37, Arg45, His49, and 77–79; these read GNGR and STE. Residue Asn80 is the Proton acceptor of the active site. Residues Trp81, Arg83, Arg200, and 206 to 208 each bind substrate; that span reads RIS. Glu219 serves as a coordination point for Mg(2+).

The protein belongs to the UPP synthase family. Homodimer. Mg(2+) serves as cofactor.

Catalyzes the condensation of isopentenyl diphosphate (IPP) with allylic pyrophosphates generating different type of terpenoids. This chain is Isoprenyl transferase, found in Prochlorococcus marinus subsp. pastoris (strain CCMP1986 / NIES-2087 / MED4).